A 1164-amino-acid polypeptide reads, in one-letter code: MEYPGIKVDTVTSGIQRRVKGRIAKTNLNVSLASKIKAKILNNSSIFKISLKHNNRALARALSKEKENSRRITTEKMQLQKEVEKLNFENTFLRLKLNTLNKKLVEIESHVSNDLLTAIEISSLSEFHQGSFLLSATKKQRNSKQCKPAHLPYARVLLTSENDDDDGADDKWQTKCNNRTISKTSPDSTSSVSRQPSSLHQCNLKAFPPKEDNQKTCGSGHLEHTSSVDILPNESHSDQSPKSSLSEMKTAPSPSLRREKLSHGNVTMRKKCVSSTPDILYVTDLDHQPTSSPGSNWNNEIHGHTNETSNNTQRNAECFLDLPSESSSEPDAKRMELVQKNTDSFHFQKTVYDAADMELTATDIGKIVAVSKSKKNQNKKKADCRKETFRKVKGASSDKKRESSKRECKDGSEVGAEEEADAARAERGAGVLDGRGDSEEPNCISSTEQPSQVNTQKKRTLQNSSDQENIQNTKRRQTYTTDEQEETNPFSRHSVKFLQDGKFDLCQKTLHHNLSKPSRQTFVIRKSEKDNLFPNQEDKDTISENLEVTNEFHIDDLSIEANENVCDHETQTMLDLKKSVSAQQNQTKINKTKQKINRRTKIISVMSQVYEDNDKDIHVLEKDNFPFHTQANKETTSGNLESSKEFESPLLFTRDNGSLRDCKTQNVLDLHKQIPDLYPDRNESQISKIPRQKVNRKTEVISGVKCFSNDQGVHCSEKDKSLLLQKDKDFPGTLKDLSEFDTPAFCNKDSAKSCDYKSEMLLGLKKHDPNMQPACQDDSKAGKKLRQKVNRKTEIISKITQIHENDRGSTHDSLNKKLCQKVNISKIISQMNQIYETINEDGNGFKSSIKDCEDIKSCDFGEINSNKKENYDPIQDPCTLVKKTKRKGSCKAGSSLAGAKNRCGLQLTDSSQVQSVPLDSGLRHHPNEADSGPGEQTNLPKMQKQSAGRSLGDAFSVSLGKEGSRPAKAVSKMTPKSKKRKLPLGCSPETHGTVEITPNTDLAKAVDSQQTEKENYLEKEKIAKRKPDFCTKVLKPLSETCSSNIKNSSLDSMCKSSLPLSISSRKTLMLEESSSLESTCIFQVGDAAHEKITTGTRNPHHRTQKSTPGSRTSLVLVDTSSVSDTNPANPENESEGQSSHPMRRKRQCVPLNLTEPSLRSKMRR.

A coiled-coil region spans residues 62-113; it reads LSKEKENSRRITTEKMQLQKEVEKLNFENTFLRLKLNTLNKKLVEIESHVSN. Disordered stretches follow at residues 160–269, 287–314, 390–492, 521–541, and 917–992; these read SEND…VTMR, HQPTSSPGSNWNNEIHGHTNETSNNTQR, RKVK…PFSR, TFVIRKSEKDNLFPNQEDKDT, and PLDS…ETHG. Residues 182-198 are compositionally biased toward low complexity; that stretch reads SKTSPDSTSSVSRQPSS. Polar residues-rich tracts occupy residues 238 to 247 and 288 to 299; these read DQSPKSSLSE and QPTSSPGSNWNN. Residues 390–412 show a composition bias toward basic and acidic residues; that stretch reads RKVKGASSDKKRESSKRECKDGS. A compositionally biased stretch (polar residues) spans 443-472; sequence CISSTEQPSQVNTQKKRTLQNSSDQENIQN. A compositionally biased stretch (basic and acidic residues) spans 525-541; the sequence is RKSEKDNLFPNQEDKDT. Residues 934–948 show a composition bias toward polar residues; sequence GEQTNLPKMQKQSAG. Ser1042 bears the Phosphoserine mark. A disordered region spans residues 1092 to 1164; sequence ITTGTRNPHH…EPSLRSKMRR (73 aa). Low complexity predominate over residues 1112–1125; that stretch reads TSLVLVDTSSVSDT. A compositionally biased stretch (polar residues) spans 1126–1140; that stretch reads NPANPENESEGQSSH.

It belongs to the shugoshin family. Part of an astrin (SPAG5)-kinastrin (SKAP) complex containing KNSTRN, SPAG5, PLK1, DYNLL1 and SGO2A. Interacts with CDCA8. Interacts with PPP2CA. As to expression, ubiquitously expressed in proliferating cells. Highly expressed in the testis and oocytes.

The protein localises to the nucleus. It is found in the chromosome. The protein resides in the centromere. Its subcellular location is the kinetochore. In terms of biological role, cooperates with PPP2CA to protect centromeric cohesin from separase-mediated cleavage in oocytes specifically during meiosis I. Has a crucial role in protecting REC8 at centromeres from cleavage by separase. During meiosis, protects centromeric cohesion complexes until metaphase II/anaphase II transition, preventing premature release of meiosis-specific REC8 cohesin complexes from anaphase I centromeres. Is thus essential for an accurate gametogenesis. May act by targeting PPP2CA to centromeres, thus leading to cohesin dephosphorylation. Essential for recruiting KIF2C to the inner centromere and for correcting defective kinetochore attachments. Involved in centromeric enrichment of AUKRB in prometaphase. This is Shugoshin 2A from Mus musculus (Mouse).